The primary structure comprises 591 residues: Glucose-6-phosphate isomerase (591 aa).

E380 acts as the Proton donor in catalysis. Catalysis depends on residues H411 and K540.

The protein belongs to the GPI family. In terms of assembly, homodimer.

Its subcellular location is the cytoplasm. The catalysed reaction is alpha-D-glucose 6-phosphate = beta-D-fructose 6-phosphate. It functions in the pathway carbohydrate degradation; glycolysis; D-glyceraldehyde 3-phosphate and glycerone phosphate from D-glucose: step 2/4. The polypeptide is Glucose-6-phosphate isomerase (GGI.R1) (Plasmodium falciparum).